The following is a 180-amino-acid chain: Oligoribonuclease (180 aa).

In terms of domain architecture, Exonuclease spans 7 to 170 (LIWIDLEMTG…DDIRESIAEL (164 aa)). The active site involves Y128.

This sequence belongs to the oligoribonuclease family.

Its subcellular location is the cytoplasm. Functionally, 3'-to-5' exoribonuclease specific for small oligoribonucleotides. The protein is Oligoribonuclease of Pseudomonas fluorescens (strain ATCC BAA-477 / NRRL B-23932 / Pf-5).